The chain runs to 67 residues: MAILRSREIRDMSLEERADELENLNSELVRERALTSAGGAPENPGRIGEIRRTIARIKTIQHELNEI.

Belongs to the universal ribosomal protein uL29 family.

This is Large ribosomal subunit protein uL29 from Methanosarcina barkeri (strain Fusaro / DSM 804).